Here is a 76-residue protein sequence, read N- to C-terminus: Horsegram inhibitor 1 (76 aa).

7 cysteine pairs are disulfide-bonded: cysteine 16–cysteine 70, cysteine 17–cysteine 32, cysteine 20–cysteine 66, cysteine 22–cysteine 30, cysteine 40–cysteine 47, cysteine 44–cysteine 59, and cysteine 49–cysteine 57.

This sequence belongs to the Bowman-Birk serine protease inhibitor family. In terms of assembly, HGI-III exists in a state of equilibrium between monomer, homodimer and trimer, with homodimer being the predominant form. The homodimer is stabilized by the non-covalent interaction between Lys-24 of one subunit and Asp-76 of the other subunit. The homodimer is more thermostable than the monomer. HGGI-I, HGGI-II and HGGI-III exist as monomers. In terms of processing, HGGI-I, HGGI-II and HGGI-III are produced by proteolysis of the N- and C-termini of HGI-III.

Functionally, inhibitors of trypsin and chymotrypsin. HGGI-III has a higher activity than HGGI-I or HGGI-II. This chain is Horsegram inhibitor 1, found in Vigna unguiculata subsp. cylindrica (Horse gram).